The primary structure comprises 51 residues: Nawaprin (51 aa).

The 50-residue stretch at 1-50 (NEKSGSCPDMSMPIPPLGICKTLCNSDSGCPNVQKCCKNGCGFMTCTTPV) folds into the WAP domain. 4 disulfide bridges follow: Cys-7/Cys-37, Cys-20/Cys-41, Cys-24/Cys-36, and Cys-30/Cys-46.

Expressed by the venom gland.

The protein resides in the secreted. Damages membranes of susceptible bacteria. Has no hemolytic activity. Not toxic to mice. Does not inhibit the proteinases elastase and cathepsin G. The sequence is that of Nawaprin from Naja nigricollis (Black-necked spitting cobra).